The primary structure comprises 276 residues: Putative inactive ferrous iron permease EfeU (276 aa).

Position 1 (methionine 1) is a topological domain, periplasmic. The helical transmembrane segment at phenylalanine 2 to isoleucine 22 threads the bilayer. Residues alanine 23–aspartate 35 are Cytoplasmic-facing. Residues cysteine 36 to isoleucine 56 traverse the membrane as a helical segment. The Periplasmic segment spans residues asparagine 57 to glutamate 69. The chain crosses the membrane as a helical span at residues leucine 70–methionine 90. Residues arginine 91–alanine 118 lie on the Cytoplasmic side of the membrane. The helical transmembrane segment at leucine 119–leucine 139 threads the bilayer. Residues alanine 140–glycine 147 lie on the Periplasmic side of the membrane. Residues isoleucine 148 to leucine 168 traverse the membrane as a helical segment. The Cytoplasmic segment spans residues tyrosine 169–alanine 179. A helical membrane pass occupies residues phenylalanine 180–isoleucine 200. Topologically, residues arginine 201–serine 244 are periplasmic. A helical transmembrane segment spans residues valine 245–proline 265. The Cytoplasmic portion of the chain corresponds to proline 266 to alanine 276.

The protein belongs to the oxidase-dependent Fe transporter (OFeT) (TC 9.A.10.1) family. As to quaternary structure, part of a ferrous iron transporter composed of EfeU, EfeO and EfeB. However, this EfeUOB tripartite iron transporter is defective in E.coli strain K12 due to a frameshift mutation in EfeU.

The protein resides in the cell inner membrane. The sequence is that of Putative inactive ferrous iron permease EfeU (efeU) from Escherichia coli (strain K12).